Consider the following 399-residue polypeptide: Coenzyme A biosynthesis bifunctional protein CoaBC (399 aa).

The tract at residues 1-190 (MQTLAGKKIL…FQPKVLEGKS (190 aa)) is phosphopantothenoylcysteine decarboxylase. Residue Cys159 is the Proton donor of the active site. The interval 191–399 (ILISAGPTRE…KILEKMRELM (209 aa)) is phosphopantothenate--cysteine ligase. Residues Asp279, Lys289, 307 to 310 (PDIV), Phe326, Lys340, and Lys344 each bind CTP.

This sequence in the N-terminal section; belongs to the HFCD (homo-oligomeric flavin containing Cys decarboxylase) superfamily. In the C-terminal section; belongs to the PPC synthetase family. It depends on Mg(2+) as a cofactor. The cofactor is FMN.

The enzyme catalyses N-[(R)-4-phosphopantothenoyl]-L-cysteine + H(+) = (R)-4'-phosphopantetheine + CO2. It catalyses the reaction (R)-4'-phosphopantothenate + L-cysteine + CTP = N-[(R)-4-phosphopantothenoyl]-L-cysteine + CMP + diphosphate + H(+). It participates in cofactor biosynthesis; coenzyme A biosynthesis; CoA from (R)-pantothenate: step 2/5. It functions in the pathway cofactor biosynthesis; coenzyme A biosynthesis; CoA from (R)-pantothenate: step 3/5. In terms of biological role, catalyzes two sequential steps in the biosynthesis of coenzyme A. In the first step cysteine is conjugated to 4'-phosphopantothenate to form 4-phosphopantothenoylcysteine. In the second step the latter compound is decarboxylated to form 4'-phosphopantotheine. The chain is Coenzyme A biosynthesis bifunctional protein CoaBC from Vibrio parahaemolyticus serotype O3:K6 (strain RIMD 2210633).